We begin with the raw amino-acid sequence, 428 residues long: 3-phosphoshikimate 1-carboxyvinyltransferase (428 aa).

3-phosphoshikimate is bound by residues Lys22, Ser23, and Arg27. Position 22 (Lys22) interacts with phosphoenolpyruvate. Residues Gly94 and Arg122 each contribute to the phosphoenolpyruvate site. The 3-phosphoshikimate site is built by Ser167, Gln169, Asp314, and Lys341. Phosphoenolpyruvate is bound at residue Gln169. Asp314 (proton acceptor) is an active-site residue. Phosphoenolpyruvate-binding residues include Arg345 and Arg387.

This sequence belongs to the EPSP synthase family. Monomer.

Its subcellular location is the cytoplasm. The catalysed reaction is 3-phosphoshikimate + phosphoenolpyruvate = 5-O-(1-carboxyvinyl)-3-phosphoshikimate + phosphate. It participates in metabolic intermediate biosynthesis; chorismate biosynthesis; chorismate from D-erythrose 4-phosphate and phosphoenolpyruvate: step 6/7. In terms of biological role, catalyzes the transfer of the enolpyruvyl moiety of phosphoenolpyruvate (PEP) to the 5-hydroxyl of shikimate-3-phosphate (S3P) to produce enolpyruvyl shikimate-3-phosphate and inorganic phosphate. The protein is 3-phosphoshikimate 1-carboxyvinyltransferase of Geotalea uraniireducens (strain Rf4) (Geobacter uraniireducens).